Consider the following 465-residue polypeptide: Ribulose bisphosphate carboxylase large chain (465 aa).

Residue K4 is modified to N6,N6,N6-trimethyllysine. Substrate-binding residues include N113 and T163. K165 functions as the Proton acceptor in the catalytic mechanism. Substrate is bound at residue K167. Mg(2+) is bound by residues K191, D193, and E194. The residue at position 191 (K191) is an N6-carboxylysine. H284 acts as the Proton acceptor in catalysis. Positions 285, 317, and 369 each coordinate substrate.

This sequence belongs to the RuBisCO large chain family. Type I subfamily. Heterohexadecamer of 8 large chains and 8 small chains; disulfide-linked. The disulfide link is formed within the large subunit homodimers. Mg(2+) is required as a cofactor. The disulfide bond which can form in the large chain dimeric partners within the hexadecamer appears to be associated with oxidative stress and protein turnover.

Its subcellular location is the plastid. It localises to the chloroplast. It carries out the reaction 2 (2R)-3-phosphoglycerate + 2 H(+) = D-ribulose 1,5-bisphosphate + CO2 + H2O. The catalysed reaction is D-ribulose 1,5-bisphosphate + O2 = 2-phosphoglycolate + (2R)-3-phosphoglycerate + 2 H(+). In terms of biological role, ruBisCO catalyzes two reactions: the carboxylation of D-ribulose 1,5-bisphosphate, the primary event in carbon dioxide fixation, as well as the oxidative fragmentation of the pentose substrate in the photorespiration process. Both reactions occur simultaneously and in competition at the same active site. This chain is Ribulose bisphosphate carboxylase large chain, found in Ailanthus altissima (Tree-of-heaven).